A 323-amino-acid chain; its full sequence is Phospho-N-acetylmuramoyl-pentapeptide-transferase (323 aa).

9 helical membrane-spanning segments follow: residues 12-32 (IVMA…IIIP), 58-78 (PTIG…IMVG), 84-104 (AMIA…DDLL), 120-140 (MILL…YIGT), 151-171 (INFG…VTNA), 177-197 (GLDG…GIIS), 200-220 (LGHI…LAFL), 229-250 (VFMG…ALIL), and 303-323 (KIVS…FASL).

It belongs to the glycosyltransferase 4 family. MraY subfamily. Requires Mg(2+) as cofactor.

It is found in the cell membrane. The enzyme catalyses UDP-N-acetyl-alpha-D-muramoyl-L-alanyl-gamma-D-glutamyl-meso-2,6-diaminopimeloyl-D-alanyl-D-alanine + di-trans,octa-cis-undecaprenyl phosphate = di-trans,octa-cis-undecaprenyl diphospho-N-acetyl-alpha-D-muramoyl-L-alanyl-D-glutamyl-meso-2,6-diaminopimeloyl-D-alanyl-D-alanine + UMP. Its pathway is cell wall biogenesis; peptidoglycan biosynthesis. Functionally, catalyzes the initial step of the lipid cycle reactions in the biosynthesis of the cell wall peptidoglycan: transfers peptidoglycan precursor phospho-MurNAc-pentapeptide from UDP-MurNAc-pentapeptide onto the lipid carrier undecaprenyl phosphate, yielding undecaprenyl-pyrophosphoryl-MurNAc-pentapeptide, known as lipid I. The polypeptide is Phospho-N-acetylmuramoyl-pentapeptide-transferase (Clostridium perfringens (strain ATCC 13124 / DSM 756 / JCM 1290 / NCIMB 6125 / NCTC 8237 / Type A)).